The primary structure comprises 327 residues: Complex I intermediate-associated protein 30, mitochondrial (327 aa).

The transit peptide at 1 to 24 (MALVHKLLRGTYFLRKFSKPTSAL) directs the protein to the mitochondrion. Residues 42-63 (PVASPGKASSQRKTEGDLQGDH) form a disordered region. The segment covering 53 to 63 (RKTEGDLQGDH) has biased composition (basic and acidic residues). A Phosphoserine modification is found at Ser-318.

This sequence belongs to the CIA30 family. As to quaternary structure, part of the mitochondrial complex I assembly/MCIA complex that comprises at least the core subunits TMEM126B, NDUFAF1, ECSIT and ACAD9 and complement subunits such as COA1 and TMEM186. Interacts with ECSIT. Interacts with ACAD9. At early stages of complex I assembly, it is found in intermediate subcomplexes that contain different subunits including NDUFB6, NDUFA6, NDUFA9, NDUFS3, NDUFS7, ND1, ND2 and ND3. Interacts with TMEM70 and TMEM242. In terms of tissue distribution, ubiquitous.

It localises to the mitochondrion. It is found in the mitochondrion matrix. Functionally, as part of the MCIA complex, involved in the assembly of the mitochondrial complex I. The sequence is that of Complex I intermediate-associated protein 30, mitochondrial from Homo sapiens (Human).